The primary structure comprises 31 residues: MSDVIIPFLTSAVTAFIVAYLLDRWYIKRRR.

The protein is Putative gene 37 protein (37) of Bacillus subtilis (Bacteriophage SP01).